The following is a 461-amino-acid chain: Cysteine--tRNA ligase (461 aa).

Residue Cys29 coordinates Zn(2+). Positions Met31–His41 match the 'HIGH' region motif. Zn(2+) contacts are provided by Cys213, His238, and Glu242. A 'KMSKS' region motif is present at residues Lys270–Ser274. Lys273 contributes to the ATP binding site.

The protein belongs to the class-I aminoacyl-tRNA synthetase family. In terms of assembly, monomer. The cofactor is Zn(2+).

Its subcellular location is the cytoplasm. It carries out the reaction tRNA(Cys) + L-cysteine + ATP = L-cysteinyl-tRNA(Cys) + AMP + diphosphate. This Delftia acidovorans (strain DSM 14801 / SPH-1) protein is Cysteine--tRNA ligase.